The primary structure comprises 84 residues: Mitochondrial import inner membrane translocase subunit tim9 (84 aa).

The Twin CX3C motif motif lies at 35 to 59 (CFSDCVQDFTSSKLSNKESECIAKC). Intrachain disulfides connect Cys-35–Cys-59 and Cys-39–Cys-55.

Belongs to the small Tim family. In terms of assembly, heterohexamer; composed of 3 copies of TIM9 and 3 copies of TIM10, named soluble 70 kDa complex. Associates with the TIM22 complex, whose core is composed of TIM22 and TIM54. Interacts with the transmembrane regions of multi-pass transmembrane proteins in transit.

Its subcellular location is the mitochondrion inner membrane. In terms of biological role, mitochondrial intermembrane chaperone that participates in the import and insertion of multi-pass transmembrane proteins into the mitochondrial inner membrane. Also required for the transfer of beta-barrel precursors from the TOM complex to the sorting and assembly machinery (SAM complex) of the outer membrane. Acts as a chaperone-like protein that protects the hydrophobic precursors from aggregation and guide them through the mitochondrial intermembrane space. This Schizosaccharomyces pombe (strain 972 / ATCC 24843) (Fission yeast) protein is Mitochondrial import inner membrane translocase subunit tim9 (tim9).